A 320-amino-acid polypeptide reads, in one-letter code: tRNA-cytidine(32) 2-sulfurtransferase (320 aa).

The short motif at 54–59 is the PP-loop motif element; sequence SGGKDS. Residues cysteine 129, cysteine 132, and cysteine 220 each coordinate [4Fe-4S] cluster.

This sequence belongs to the TtcA family. As to quaternary structure, homodimer. Requires Mg(2+) as cofactor. It depends on [4Fe-4S] cluster as a cofactor.

Its subcellular location is the cytoplasm. The enzyme catalyses cytidine(32) in tRNA + S-sulfanyl-L-cysteinyl-[cysteine desulfurase] + AH2 + ATP = 2-thiocytidine(32) in tRNA + L-cysteinyl-[cysteine desulfurase] + A + AMP + diphosphate + H(+). It participates in tRNA modification. Functionally, catalyzes the ATP-dependent 2-thiolation of cytidine in position 32 of tRNA, to form 2-thiocytidine (s(2)C32). The sulfur atoms are provided by the cysteine/cysteine desulfurase (IscS) system. The sequence is that of tRNA-cytidine(32) 2-sulfurtransferase from Bordetella bronchiseptica (strain ATCC BAA-588 / NCTC 13252 / RB50) (Alcaligenes bronchisepticus).